Here is a 369-residue protein sequence, read N- to C-terminus: Anhydro-N-acetylmuramic acid kinase (369 aa).

12 to 19 (GTSLDGVD) serves as a coordination point for ATP.

This sequence belongs to the anhydro-N-acetylmuramic acid kinase family.

It catalyses the reaction 1,6-anhydro-N-acetyl-beta-muramate + ATP + H2O = N-acetyl-D-muramate 6-phosphate + ADP + H(+). The protein operates within amino-sugar metabolism; 1,6-anhydro-N-acetylmuramate degradation. It functions in the pathway cell wall biogenesis; peptidoglycan recycling. Functionally, catalyzes the specific phosphorylation of 1,6-anhydro-N-acetylmuramic acid (anhMurNAc) with the simultaneous cleavage of the 1,6-anhydro ring, generating MurNAc-6-P. Is required for the utilization of anhMurNAc either imported from the medium or derived from its own cell wall murein, and thus plays a role in cell wall recycling. The polypeptide is Anhydro-N-acetylmuramic acid kinase (Shigella flexneri serotype 5b (strain 8401)).